The primary structure comprises 232 residues: Putative homeobox protein NANOG2 (232 aa).

Positions M1 to Q39 are disordered. Residues S11 to K25 show a composition bias toward polar residues. The segment covering S26–P35 has biased composition (basic and acidic residues). 8 repeat units span residues W123 to T127, W128 to T132, W133 to T137, W143 to S147, W148 to T152, W153 to S157, W158 to A162, and W163 to F167. An 8 X repeats starting with a Trp in each unit region spans residues W123 to F167. A sufficient for transactivation activity region spans residues W123–F167. The sufficient for strong transactivation activity stretch occupies residues Y168–V232.

It belongs to the Nanog homeobox family.

The protein resides in the nucleus. In terms of biological role, probable transcriptional regulator. This is Putative homeobox protein NANOG2 (NANOGP1) from Pan paniscus (Pygmy chimpanzee).